A 657-amino-acid chain; its full sequence is Glycogen debranching enzyme (657 aa).

Residue aspartate 336 is the Nucleophile of the active site. The Proton donor role is filled by glutamate 371. The segment covering 458-467 (NEANGEENRD) has biased composition (basic and acidic residues). A disordered region spans residues 458–479 (NEANGEENRDGTNNNYSNNHGK).

This sequence belongs to the glycosyl hydrolase 13 family.

The catalysed reaction is Hydrolysis of (1-&gt;6)-alpha-D-glucosidic linkages to branches with degrees of polymerization of three or four glucose residues in limit dextrin.. It participates in glycan degradation; glycogen degradation. In terms of biological role, removes maltotriose and maltotetraose chains that are attached by 1,6-alpha-linkage to the limit dextrin main chain, generating a debranched limit dextrin. The polypeptide is Glycogen debranching enzyme (Escherichia coli O8 (strain IAI1)).